An 89-amino-acid polypeptide reads, in one-letter code: Small ribosomal subunit protein uS15 (89 aa).

A compositionally biased stretch (basic and acidic residues) spans 1 to 21 (MAISQERKNEIIKEYARHEGD). The interval 1–24 (MAISQERKNEIIKEYARHEGDTGS) is disordered.

This sequence belongs to the universal ribosomal protein uS15 family. In terms of assembly, part of the 30S ribosomal subunit. Forms a bridge to the 50S subunit in the 70S ribosome, contacting the 23S rRNA.

Functionally, one of the primary rRNA binding proteins, it binds directly to 16S rRNA where it helps nucleate assembly of the platform of the 30S subunit by binding and bridging several RNA helices of the 16S rRNA. Forms an intersubunit bridge (bridge B4) with the 23S rRNA of the 50S subunit in the ribosome. The polypeptide is Small ribosomal subunit protein uS15 (Enterococcus faecalis (strain ATCC 700802 / V583)).